The sequence spans 231 residues: Cytochrome c oxidase assembly factor 7A (231 aa).

Sel1-like repeat units follow at residues 34–66 (PDGCNRLAEYFENIKKNFESAAGILKINCDQNE), 68–104 (SESFYKLGAYYVTGKGGLPVDLKAAYSCFLKSCNKGG), 108–145 (IDSCHNVGLLAHDGRVNDEKADAVTARDYYNKACDGNF), 146–182 (AASCFNLSATYLQGAPGIPKDMNKALHFSEKACSLGH), and 183–218 (VWGCANASRMYKLGDGVAKNDEKAESLKNRARDLHK).

It belongs to the hcp beta-lactamase family.

Its subcellular location is the mitochondrion intermembrane space. Its function is as follows. May be required for assembly of mitochondrial respiratory chain complexes. In Xenopus laevis (African clawed frog), this protein is Cytochrome c oxidase assembly factor 7A (coa7-a).